The sequence spans 199 residues: Desiccation stress protein DSP-22, chloroplastic (199 aa).

The N-terminal 52 residues, 1-52, are a transit peptide targeting the chloroplast; sequence MASSTCYATIPAMSCRGQSTITRFGPNNLFLGKQSYELPLMRRNAKFTVRSM. Basic and acidic residues predominate over residues 53 to 62; sequence REDNEKEEQQ. Residues 53–82 are disordered; the sequence is REDNEKEEQQQQKQQQTHDGGPDLTPNRTE. Helical transmembrane passes span 130–152 and 172–191; these read FNGG…LIPI and IWNG…TEYV.

This sequence belongs to the ELIP/psbS family. As to expression, preferentially localized in the chloroplast-rich palisade parenchyma cells, in extracts of desiccated leaves, in seeds, but not in roots or untreated leaves.

The protein localises to the plastid. Its subcellular location is the chloroplast thylakoid membrane. Functionally, possibly exerts a protective role during water loss. This is Desiccation stress protein DSP-22, chloroplastic (DSP-22) from Craterostigma plantagineum (Blue gem).